We begin with the raw amino-acid sequence, 350 residues long: MEVRHNWTHAEVRDLMEKPFMDLLFEAQLVHRQYQQTNYVQVSTLLSIKTGACPEDCKYCPQSARYTTDIEKERLMEVERVLDAAQKAKNAGSTRFCMGAAWKNPKERDMPHLTDMIKGVKGMGLETCMTLGMLTPDQAKQLATAGLDYYNHNLDTSPEFYGNIITTRTYQDRLDTLSHVRDAGMKICSGGIIGMGESANDRAGLLVELANLPVHPESVPINMLVKVKGTPLEEVDDVEPFDFIRLIAIARIMMPQSAVRLSAGRENMNEQMQALCFMAGANSVFYGCKLLTTPNPSEDKDMMLFNKLGINSQEVSQKPDEIEENELLDRVVERVTARPTKDDLFYDASV.

One can recognise a Radical SAM core domain in the interval 38–256 (NYVQVSTLLS…IAIARIMMPQ (219 aa)). [4Fe-4S] cluster-binding residues include C53, C57, and C60. The [2Fe-2S] cluster site is built by C97, C128, C188, and R260.

Belongs to the radical SAM superfamily. Biotin synthase family. In terms of assembly, homodimer. The cofactor is [4Fe-4S] cluster. [2Fe-2S] cluster serves as cofactor.

The enzyme catalyses (4R,5S)-dethiobiotin + (sulfur carrier)-SH + 2 reduced [2Fe-2S]-[ferredoxin] + 2 S-adenosyl-L-methionine = (sulfur carrier)-H + biotin + 2 5'-deoxyadenosine + 2 L-methionine + 2 oxidized [2Fe-2S]-[ferredoxin]. Its pathway is cofactor biosynthesis; biotin biosynthesis; biotin from 7,8-diaminononanoate: step 2/2. Functionally, catalyzes the conversion of dethiobiotin (DTB) to biotin by the insertion of a sulfur atom into dethiobiotin via a radical-based mechanism. In Vibrio campbellii (strain ATCC BAA-1116), this protein is Biotin synthase.